Consider the following 93-residue polypeptide: uncharacterized protein (93 aa).

The protein localises to the plastid. It localises to the chloroplast. This is an uncharacterized protein from Diacronema lutheri (Unicellular marine alga).